Consider the following 100-residue polypeptide: C-X-C motif chemokine 11 (100 aa).

Residues 1–21 form the signal peptide; that stretch reads MNRKVTAIALAAIIWATAAQG. Cystine bridges form between cysteine 30-cysteine 57 and cysteine 32-cysteine 74.

The protein belongs to the intercrine alpha (chemokine CxC) family. As to quaternary structure, interacts with TNFAIP6 (via Link domain).

The protein localises to the secreted. Functionally, chemotactic for interleukin-activated T-cells but not unstimulated T-cells, neutrophils or monocytes. Induces calcium release in activated T-cells. Binds to CXCR3. May play an important role in CNS diseases which involve T-cell recruitment. May play a role in skin immune responses. This chain is C-X-C motif chemokine 11 (Cxcl11), found in Mus musculus (Mouse).